The primary structure comprises 366 residues: Putative type II methyltransferase M.MjaORF1200P (366 aa).

An SAM-dependent MTase C5-type domain is found at 5–366 (LKFIDLFCGC…IARVIKENLK (362 aa)). Cys-133 is a catalytic residue.

It belongs to the class I-like SAM-binding methyltransferase superfamily. C5-methyltransferase family.

The enzyme catalyses a 2'-deoxycytidine in DNA + S-adenosyl-L-methionine = a 5-methyl-2'-deoxycytidine in DNA + S-adenosyl-L-homocysteine + H(+). In terms of biological role, a putative methylase that probably protects DNA from cleavage by the MjaORF1200P endonuclease. This is Putative type II methyltransferase M.MjaORF1200P from Methanocaldococcus jannaschii (strain ATCC 43067 / DSM 2661 / JAL-1 / JCM 10045 / NBRC 100440) (Methanococcus jannaschii).